A 525-amino-acid polypeptide reads, in one-letter code: Ribosomal protein uS12 methylthiotransferase RimO (525 aa).

A compositionally biased stretch (polar residues) spans 1–20; sequence MPKISTESVNTTIAPSQPAS. The disordered stretch occupies residues 1–44; sequence MPKISTESVNTTIAPSQPASTAPKDTATLFNPAKPTATPAQSSI. One can recognise an MTTase N-terminal domain in the interval 82–192; it reads PKIGFVSLGC…VIRAVALHVP (111 aa). [4Fe-4S] cluster is bound by residues cysteine 91, cysteine 127, cysteine 156, cysteine 230, cysteine 234, and cysteine 237. The region spanning 216–453 is the Radical SAM core domain; sequence LTPSHYAYLK…MTLQQDISAQ (238 aa). Residues 456-525 form the TRAM domain; it reads QEKIGKTLMV…EYDLFASYQA (70 aa).

This sequence belongs to the methylthiotransferase family. RimO subfamily. The cofactor is [4Fe-4S] cluster.

The protein resides in the cytoplasm. The enzyme catalyses L-aspartate(89)-[ribosomal protein uS12]-hydrogen + (sulfur carrier)-SH + AH2 + 2 S-adenosyl-L-methionine = 3-methylsulfanyl-L-aspartate(89)-[ribosomal protein uS12]-hydrogen + (sulfur carrier)-H + 5'-deoxyadenosine + L-methionine + A + S-adenosyl-L-homocysteine + 2 H(+). Its function is as follows. Catalyzes the methylthiolation of an aspartic acid residue of ribosomal protein uS12. The protein is Ribosomal protein uS12 methylthiotransferase RimO of Psychrobacter arcticus (strain DSM 17307 / VKM B-2377 / 273-4).